The primary structure comprises 577 residues: Anthranilate synthase alpha subunit 1, chloroplastic (577 aa).

The transit peptide at 1–34 directs the protein to the chloroplast; the sequence is MASLVLSLRIAPSTPPLGLGGGRFRGRRGAVACR.

It belongs to the anthranilate synthase component I family. Heterotetramer consisting of two non-identical subunits: a beta subunit and a large alpha subunit.

The protein resides in the plastid. The protein localises to the chloroplast. The catalysed reaction is chorismate + L-glutamine = anthranilate + pyruvate + L-glutamate + H(+). Its pathway is amino-acid biosynthesis; L-tryptophan biosynthesis; L-tryptophan from chorismate: step 1/5. Feedback inhibition by tryptophan. Its function is as follows. Part of a heterotetrameric complex that catalyzes the two-step biosynthesis of anthranilate, an intermediate in the biosynthesis of L-tryptophan. In the first step, the glutamine-binding beta subunit of anthranilate synthase (AS) provides the glutamine amidotransferase activity which generates ammonia as a substrate that, along with chorismate, is used in the second step, catalyzed by the large alpha subunit of AS to produce anthranilate. This is Anthranilate synthase alpha subunit 1, chloroplastic (ASA1) from Oryza sativa subsp. indica (Rice).